The chain runs to 444 residues: Tubulin beta chain (444 aa).

GTP is bound by residues Gln11, Glu69, Ser138, Gly142, Thr143, Gly144, Asn204, and Asn226. Mg(2+) is bound at residue Glu69.

The protein belongs to the tubulin family. In terms of assembly, dimer of alpha and beta chains. A typical microtubule is a hollow water-filled tube with an outer diameter of 25 nm and an inner diameter of 15 nM. Alpha-beta heterodimers associate head-to-tail to form protofilaments running lengthwise along the microtubule wall with the beta-tubulin subunit facing the microtubule plus end conferring a structural polarity. Microtubules usually have 13 protofilaments but different protofilament numbers can be found in some organisms and specialized cells. Requires Mg(2+) as cofactor.

The protein resides in the cytoplasm. It localises to the cytoskeleton. Tubulin is the major constituent of microtubules, a cylinder consisting of laterally associated linear protofilaments composed of alpha- and beta-tubulin heterodimers. Microtubules grow by the addition of GTP-tubulin dimers to the microtubule end, where a stabilizing cap forms. Below the cap, tubulin dimers are in GDP-bound state, owing to GTPase activity of alpha-tubulin. The sequence is that of Tubulin beta chain (TBB) from Onchocerca gibsoni.